The following is a 284-amino-acid chain: Bifunctional protein FolD (284 aa).

Residues 165 to 167 (GAS), Ser-190, and Ile-231 contribute to the NADP(+) site.

The protein belongs to the tetrahydrofolate dehydrogenase/cyclohydrolase family. In terms of assembly, homodimer.

The enzyme catalyses (6R)-5,10-methylene-5,6,7,8-tetrahydrofolate + NADP(+) = (6R)-5,10-methenyltetrahydrofolate + NADPH. The catalysed reaction is (6R)-5,10-methenyltetrahydrofolate + H2O = (6R)-10-formyltetrahydrofolate + H(+). Its pathway is one-carbon metabolism; tetrahydrofolate interconversion. Functionally, catalyzes the oxidation of 5,10-methylenetetrahydrofolate to 5,10-methenyltetrahydrofolate and then the hydrolysis of 5,10-methenyltetrahydrofolate to 10-formyltetrahydrofolate. This chain is Bifunctional protein FolD, found in Polynucleobacter necessarius subsp. necessarius (strain STIR1).